A 381-amino-acid polypeptide reads, in one-letter code: Dihydroorotate dehydrogenase (quinone) (381 aa).

Residues 74–78 (AGFDK) and Thr-98 contribute to the FMN site. Lys-78 is a binding site for substrate. A substrate-binding site is contributed by 123–127 (NRMGF). Asn-152 and Asn-185 together coordinate FMN. Residue Asn-185 coordinates substrate. The active-site Nucleophile is Ser-188. Residue Asn-190 participates in substrate binding. The FMN site is built by Lys-223 and Thr-251. 252-253 (NT) provides a ligand contact to substrate. FMN contacts are provided by residues Gly-289, Gly-318, and 339–340 (YT). Residues 359-381 (RSSPPSPDVTLPPENTPVGQIQA) are disordered.

It belongs to the dihydroorotate dehydrogenase family. Type 2 subfamily. In terms of assembly, monomer. FMN is required as a cofactor.

Its subcellular location is the cell membrane. It catalyses the reaction (S)-dihydroorotate + a quinone = orotate + a quinol. Its pathway is pyrimidine metabolism; UMP biosynthesis via de novo pathway; orotate from (S)-dihydroorotate (quinone route): step 1/1. Its function is as follows. Catalyzes the conversion of dihydroorotate to orotate with quinone as electron acceptor. In Synechococcus sp. (strain JA-2-3B'a(2-13)) (Cyanobacteria bacterium Yellowstone B-Prime), this protein is Dihydroorotate dehydrogenase (quinone).